The primary structure comprises 212 residues: Protein-L-isoaspartate O-methyltransferase (212 aa).

S60 is an active-site residue.

The protein belongs to the methyltransferase superfamily. L-isoaspartyl/D-aspartyl protein methyltransferase family.

It localises to the cytoplasm. The enzyme catalyses [protein]-L-isoaspartate + S-adenosyl-L-methionine = [protein]-L-isoaspartate alpha-methyl ester + S-adenosyl-L-homocysteine. Functionally, catalyzes the methyl esterification of L-isoaspartyl residues in peptides and proteins that result from spontaneous decomposition of normal L-aspartyl and L-asparaginyl residues. It plays a role in the repair and/or degradation of damaged proteins. The sequence is that of Protein-L-isoaspartate O-methyltransferase from Pseudomonas putida (strain ATCC 700007 / DSM 6899 / JCM 31910 / BCRC 17059 / LMG 24140 / F1).